A 64-amino-acid polypeptide reads, in one-letter code: Cytochrome c oxidase subunit 5C-2 (64 aa).

A helical membrane pass occupies residues 15-34 (SVVKELVIGTVLGLAAGGLW).

Belongs to the cytochrome c oxidase subunit 5C family.

Its subcellular location is the mitochondrion inner membrane. This protein is one of the nuclear-coded polypeptide chains of cytochrome c oxidase, the terminal oxidase in mitochondrial electron transport. This Helianthus annuus (Common sunflower) protein is Cytochrome c oxidase subunit 5C-2 (COX5C2).